The chain runs to 243 residues: Adenosylcobinamide-GDP ribazoletransferase (243 aa).

5 helical membrane passes run L31–L51, A61–A81, I109–L129, G134–T154, and L188–L208.

Belongs to the CobS family. Mg(2+) serves as cofactor.

The protein resides in the cell inner membrane. It catalyses the reaction alpha-ribazole + adenosylcob(III)inamide-GDP = adenosylcob(III)alamin + GMP + H(+). The catalysed reaction is alpha-ribazole 5'-phosphate + adenosylcob(III)inamide-GDP = adenosylcob(III)alamin 5'-phosphate + GMP + H(+). It functions in the pathway cofactor biosynthesis; adenosylcobalamin biosynthesis; adenosylcobalamin from cob(II)yrinate a,c-diamide: step 7/7. Functionally, joins adenosylcobinamide-GDP and alpha-ribazole to generate adenosylcobalamin (Ado-cobalamin). Also synthesizes adenosylcobalamin 5'-phosphate from adenosylcobinamide-GDP and alpha-ribazole 5'-phosphate. This chain is Adenosylcobinamide-GDP ribazoletransferase, found in Ectopseudomonas mendocina (strain ymp) (Pseudomonas mendocina).